Reading from the N-terminus, the 226-residue chain is 2-C-methyl-D-erythritol 4-phosphate cytidylyltransferase (226 aa).

The protein belongs to the IspD/TarI cytidylyltransferase family. IspD subfamily.

It carries out the reaction 2-C-methyl-D-erythritol 4-phosphate + CTP + H(+) = 4-CDP-2-C-methyl-D-erythritol + diphosphate. It functions in the pathway isoprenoid biosynthesis; isopentenyl diphosphate biosynthesis via DXP pathway; isopentenyl diphosphate from 1-deoxy-D-xylulose 5-phosphate: step 2/6. Its function is as follows. Catalyzes the formation of 4-diphosphocytidyl-2-C-methyl-D-erythritol from CTP and 2-C-methyl-D-erythritol 4-phosphate (MEP). In Bacillus mycoides (strain KBAB4) (Bacillus weihenstephanensis), this protein is 2-C-methyl-D-erythritol 4-phosphate cytidylyltransferase.